Consider the following 381-residue polypeptide: Chaperone protein DnaJ (381 aa).

In terms of domain architecture, J spans 5–70; it reads DYYEVLGCDR…QKRGAYDRYG (66 aa). A CR-type zinc finger spans residues 136-214; the sequence is GKTAQISIPT…CGGAGRVTRE (79 aa). Zn(2+) contacts are provided by cysteine 149, cysteine 152, cysteine 166, cysteine 169, cysteine 188, cysteine 191, cysteine 202, and cysteine 205. 4 CXXCXGXG motif repeats span residues 149–156, 166–173, 188–195, and 202–209; these read CEVCSGSG, CRTCNGAG, CPSCQGRG, and CPNCGGAG.

The protein belongs to the DnaJ family. As to quaternary structure, homodimer. It depends on Zn(2+) as a cofactor.

The protein resides in the cytoplasm. Its function is as follows. Participates actively in the response to hyperosmotic and heat shock by preventing the aggregation of stress-denatured proteins and by disaggregating proteins, also in an autonomous, DnaK-independent fashion. Unfolded proteins bind initially to DnaJ; upon interaction with the DnaJ-bound protein, DnaK hydrolyzes its bound ATP, resulting in the formation of a stable complex. GrpE releases ADP from DnaK; ATP binding to DnaK triggers the release of the substrate protein, thus completing the reaction cycle. Several rounds of ATP-dependent interactions between DnaJ, DnaK and GrpE are required for fully efficient folding. Also involved, together with DnaK and GrpE, in the DNA replication of plasmids through activation of initiation proteins. The chain is Chaperone protein DnaJ from Azorhizobium caulinodans (strain ATCC 43989 / DSM 5975 / JCM 20966 / LMG 6465 / NBRC 14845 / NCIMB 13405 / ORS 571).